The following is a 347-amino-acid chain: tRNA dimethylallyltransferase (347 aa).

20-27 (GPTASGKT) lines the ATP pocket. 22–27 (TASGKT) is a binding site for substrate. Interaction with substrate tRNA stretches follow at residues 45–48 (DSAM), 169–173 (QRLMR), and 275–280 (RCVGYR).

It belongs to the IPP transferase family. As to quaternary structure, monomer. Mg(2+) is required as a cofactor.

The catalysed reaction is adenosine(37) in tRNA + dimethylallyl diphosphate = N(6)-dimethylallyladenosine(37) in tRNA + diphosphate. Functionally, catalyzes the transfer of a dimethylallyl group onto the adenine at position 37 in tRNAs that read codons beginning with uridine, leading to the formation of N6-(dimethylallyl)adenosine (i(6)A). In Marinobacter nauticus (strain ATCC 700491 / DSM 11845 / VT8) (Marinobacter aquaeolei), this protein is tRNA dimethylallyltransferase.